A 100-amino-acid chain; its full sequence is NADH-quinone oxidoreductase subunit K (100 aa).

Helical transmembrane passes span 4 to 24 (ITYY…GVLV), 29 to 49 (LVVF…FVAF), and 63 to 83 (FFVI…VIAV).

The protein belongs to the complex I subunit 4L family. In terms of assembly, NDH-1 is composed of 14 different subunits. Subunits NuoA, H, J, K, L, M, N constitute the membrane sector of the complex.

The protein localises to the cell inner membrane. The catalysed reaction is a quinone + NADH + 5 H(+)(in) = a quinol + NAD(+) + 4 H(+)(out). Functionally, NDH-1 shuttles electrons from NADH, via FMN and iron-sulfur (Fe-S) centers, to quinones in the respiratory chain. The immediate electron acceptor for the enzyme in this species is believed to be ubiquinone. Couples the redox reaction to proton translocation (for every two electrons transferred, four hydrogen ions are translocated across the cytoplasmic membrane), and thus conserves the redox energy in a proton gradient. The protein is NADH-quinone oxidoreductase subunit K of Myxococcus xanthus (strain DK1622).